The chain runs to 1224 residues: Probable serine/threonine-protein kinase DDB_G0292350 (1224 aa).

Disordered stretches follow at residues Met-57–Arg-98 and Ser-252–Asn-284. 2 stretches are compositionally biased toward low complexity: residues Ser-58–Ser-74 and Ser-83–Ser-95. 2 coiled-coil regions span residues Leu-352–Asn-381 and Asp-540–Thr-569. Disordered stretches follow at residues Gln-693–Thr-784 and Phe-815–Ile-836. The segment covering Asn-743–Gly-768 has biased composition (low complexity). The segment covering Gly-772 to Thr-784 has biased composition (polar residues). The Protein kinase domain occupies Phe-935 to Leu-1193. ATP is bound by residues Leu-941 to Val-949 and Lys-964. The active-site Proton acceptor is Asp-1063.

It belongs to the protein kinase superfamily. Ser/Thr protein kinase family. Requires Mg(2+) as cofactor.

The enzyme catalyses L-seryl-[protein] + ATP = O-phospho-L-seryl-[protein] + ADP + H(+). It catalyses the reaction L-threonyl-[protein] + ATP = O-phospho-L-threonyl-[protein] + ADP + H(+). This is Probable serine/threonine-protein kinase DDB_G0292350 from Dictyostelium discoideum (Social amoeba).